A 426-amino-acid polypeptide reads, in one-letter code: Serine--tRNA ligase (426 aa).

230–232 (TSE) is an L-serine binding site. 261 to 263 (RKE) is an ATP binding site. An L-serine-binding site is contributed by Glu-284. 348-351 (EISS) lines the ATP pocket. Ser-385 serves as a coordination point for L-serine.

Belongs to the class-II aminoacyl-tRNA synthetase family. Type-1 seryl-tRNA synthetase subfamily. In terms of assembly, homodimer. The tRNA molecule binds across the dimer.

It localises to the cytoplasm. The catalysed reaction is tRNA(Ser) + L-serine + ATP = L-seryl-tRNA(Ser) + AMP + diphosphate + H(+). It carries out the reaction tRNA(Sec) + L-serine + ATP = L-seryl-tRNA(Sec) + AMP + diphosphate + H(+). It participates in aminoacyl-tRNA biosynthesis; selenocysteinyl-tRNA(Sec) biosynthesis; L-seryl-tRNA(Sec) from L-serine and tRNA(Sec): step 1/1. In terms of biological role, catalyzes the attachment of serine to tRNA(Ser). Is also able to aminoacylate tRNA(Sec) with serine, to form the misacylated tRNA L-seryl-tRNA(Sec), which will be further converted into selenocysteinyl-tRNA(Sec). This Wolbachia pipientis subsp. Culex pipiens (strain wPip) protein is Serine--tRNA ligase.